The primary structure comprises 547 residues: Chaperonin GroEL (547 aa).

ATP contacts are provided by residues 30 to 33 (TLGP), lysine 51, 87 to 91 (DGTTT), glycine 415, and aspartate 495.

It belongs to the chaperonin (HSP60) family. As to quaternary structure, forms a cylinder of 14 subunits composed of two heptameric rings stacked back-to-back. Interacts with the co-chaperonin GroES.

It is found in the cytoplasm. The catalysed reaction is ATP + H2O + a folded polypeptide = ADP + phosphate + an unfolded polypeptide.. Together with its co-chaperonin GroES, plays an essential role in assisting protein folding. The GroEL-GroES system forms a nano-cage that allows encapsulation of the non-native substrate proteins and provides a physical environment optimized to promote and accelerate protein folding. The protein is Chaperonin GroEL of Ralstonia nicotianae (strain ATCC BAA-1114 / GMI1000) (Ralstonia solanacearum).